A 381-amino-acid chain; its full sequence is Homoserine O-succinyltransferase (381 aa).

The AB hydrolase-1 domain occupies 45 to 360 (NAVLVCHALN…PHGHDAFLLD (316 aa)). The active-site Nucleophile is Ser-151. Arg-221 is a binding site for substrate. Residues Asp-321 and His-354 contribute to the active site. Asp-355 provides a ligand contact to substrate.

It belongs to the AB hydrolase superfamily. MetX family. In terms of assembly, homodimer.

The protein resides in the cytoplasm. The enzyme catalyses L-homoserine + succinyl-CoA = O-succinyl-L-homoserine + CoA. It participates in amino-acid biosynthesis; L-methionine biosynthesis via de novo pathway; O-succinyl-L-homoserine from L-homoserine: step 1/1. Its function is as follows. Transfers a succinyl group from succinyl-CoA to L-homoserine, forming succinyl-L-homoserine. In Burkholderia pseudomallei (strain 1710b), this protein is Homoserine O-succinyltransferase.